The primary structure comprises 267 residues: Undecaprenyl-diphosphatase (267 aa).

Transmembrane regions (helical) follow at residues 4–24 (LYAL…ISST), 41–61 (FWKS…IFVF), 69–89 (LDIW…GLFV), 96–116 (LFNG…FILI), 173–193 (AAEF…AYSI), 207–227 (IPLG…IKFF), and 239–259 (FGIY…SGIL).

It belongs to the UppP family.

Its subcellular location is the cell inner membrane. It carries out the reaction di-trans,octa-cis-undecaprenyl diphosphate + H2O = di-trans,octa-cis-undecaprenyl phosphate + phosphate + H(+). Catalyzes the dephosphorylation of undecaprenyl diphosphate (UPP). Confers resistance to bacitracin. This is Undecaprenyl-diphosphatase from Campylobacter jejuni subsp. jejuni serotype O:23/36 (strain 81-176).